Consider the following 434-residue polypeptide: Serine hydroxymethyltransferase (434 aa).

Residues Leu-124 and 128-130 (GHL) each bind (6S)-5,6,7,8-tetrahydrofolate. Residue Lys-233 is modified to N6-(pyridoxal phosphate)lysine. Residue Glu-249 coordinates (6S)-5,6,7,8-tetrahydrofolate.

Belongs to the SHMT family. As to quaternary structure, homodimer. The cofactor is pyridoxal 5'-phosphate.

The protein localises to the cytoplasm. It carries out the reaction (6R)-5,10-methylene-5,6,7,8-tetrahydrofolate + glycine + H2O = (6S)-5,6,7,8-tetrahydrofolate + L-serine. Its pathway is one-carbon metabolism; tetrahydrofolate interconversion. It functions in the pathway amino-acid biosynthesis; glycine biosynthesis; glycine from L-serine: step 1/1. In terms of biological role, catalyzes the reversible interconversion of serine and glycine with tetrahydrofolate (THF) serving as the one-carbon carrier. This reaction serves as the major source of one-carbon groups required for the biosynthesis of purines, thymidylate, methionine, and other important biomolecules. Also exhibits THF-independent aldolase activity toward beta-hydroxyamino acids, producing glycine and aldehydes, via a retro-aldol mechanism. The chain is Serine hydroxymethyltransferase from Synechococcus sp. (strain JA-3-3Ab) (Cyanobacteria bacterium Yellowstone A-Prime).